The chain runs to 655 residues: p-hydroxybenzoic acid efflux pump subunit AaeB (655 aa).

Transmembrane regions (helical) follow at residues 13–33, 38–58, 69–89, 93–113, 121–141, 152–172, 370–390, 407–427, 431–451, 459–479, and 482–502; these read FAVKLACAIVLALFIGFHFQL, WAVLTAAIVAAGPAFAAGGEP, LRIIGTFIGCIAALIIIISMI, LLMILVCCVWAGFCTWISSLV, WGLSGYTALIIVITIQTEPLL, EIVIGIGCAILADLLFSPRSI, LFWLWTGWTSGNGAMVMIAVV, FIYGTLAALPLGLLYFLVIIP, QSMLLLCLSLAVLGFFIGIEV, MGALASTINIIVLDNPMTFHF, and FLDSALGQIVGCMLAFIVILL.

It belongs to the aromatic acid exporter ArAE (TC 2.A.85) family.

The protein localises to the cell inner membrane. Its function is as follows. Forms an efflux pump with AaeA. Could function as a metabolic relief valve, allowing to eliminate certain compounds when they accumulate to high levels in the cell. The sequence is that of p-hydroxybenzoic acid efflux pump subunit AaeB from Salmonella enteritidis PT4 (strain P125109).